The following is a 312-amino-acid chain: Small ribosomal subunit biogenesis GTPase RsgA (312 aa).

Residues 86-245 form the CP-type G domain; that stretch reads QSFLKRPAVA…LADTPGFNRP (160 aa). Residues 135–138 and 187–195 each bind GTP; these read TKID and GPSGVGKTS. 4 residues coordinate Zn(2+): C270, C275, H277, and C283.

It belongs to the TRAFAC class YlqF/YawG GTPase family. RsgA subfamily. Monomer. Associates with 30S ribosomal subunit, binds 16S rRNA. Zn(2+) is required as a cofactor.

The protein resides in the cytoplasm. In terms of biological role, one of several proteins that assist in the late maturation steps of the functional core of the 30S ribosomal subunit. Helps release RbfA from mature subunits. May play a role in the assembly of ribosomal proteins into the subunit. Circularly permuted GTPase that catalyzes slow GTP hydrolysis, GTPase activity is stimulated by the 30S ribosomal subunit. The polypeptide is Small ribosomal subunit biogenesis GTPase RsgA (Prochlorococcus marinus (strain NATL1A)).